Reading from the N-terminus, the 431-residue chain is UDP-N-acetylglucosamine 1-carboxyvinyltransferase (431 aa).

24–25 (KN) contacts phosphoenolpyruvate. Arginine 95 lines the UDP-N-acetyl-alpha-D-glucosamine pocket. Catalysis depends on aspartate 119, which acts as the Proton donor. UDP-N-acetyl-alpha-D-glucosamine is bound by residues aspartate 314 and methionine 336.

This sequence belongs to the EPSP synthase family. MurA subfamily.

The protein resides in the cytoplasm. The catalysed reaction is phosphoenolpyruvate + UDP-N-acetyl-alpha-D-glucosamine = UDP-N-acetyl-3-O-(1-carboxyvinyl)-alpha-D-glucosamine + phosphate. The protein operates within cell wall biogenesis; peptidoglycan biosynthesis. Functionally, cell wall formation. Adds enolpyruvyl to UDP-N-acetylglucosamine. In Bradyrhizobium diazoefficiens (strain JCM 10833 / BCRC 13528 / IAM 13628 / NBRC 14792 / USDA 110), this protein is UDP-N-acetylglucosamine 1-carboxyvinyltransferase.